The primary structure comprises 1251 residues: Centrosomal protein of 162 kDa (1251 aa).

2 stretches are compositionally biased toward basic and acidic residues: residues M1–G19 and E144–S159. Disordered regions lie at residues M1–L33, E144–N183, and L442–A473. Residues Y160–D169 are compositionally biased toward acidic residues. The segment covering S457 to S470 has biased composition (low complexity). 3 coiled-coil regions span residues E559 to T782, Y813 to T1165, and K1210 to L1242. The tract at residues S1078 to T1100 is disordered. A compositionally biased stretch (basic and acidic residues) spans L1082 to S1095.

Belongs to the CEP162 family. Expressed in retina and brain (at protein level).

The protein resides in the cytoplasm. Its subcellular location is the cytoskeleton. It localises to the microtubule organizing center. The protein localises to the centrosome. It is found in the centriole. The protein resides in the nucleus. Required to promote assembly of the transition zone in primary cilia. Acts by specifically recognizing and binding the axonemal microtubule. Plays a role in cell proliferation and differentiation in the neuroretina. Has an ATPase activity in vitro. The sequence is that of Centrosomal protein of 162 kDa (CEP162) from Coturnix coturnix (Common quail).